The chain runs to 737 residues: Transcription activator MSS11 (737 aa).

The disordered stretch occupies residues 1–23; it reads MDNTTNINTNERSSNTDFSSAPN. A LisH domain is found at 51-83; it reads SKQLLYAHIYNYLIKNNYWNSAAKFLSEADLPL. 4 disordered regions span residues 191–220, 268–347, 413–439, and 572–660; these read TQNSFPVSEESFRPNGDGSNFNLNDPTNRN, LQSP…PTNQ, GNQNYQSNTRNNTAEETTPTNDNNANG, and KTNT…TKES. The span at 207 to 220 shows a compositional bias: polar residues; sequence DGSNFNLNDPTNRN. The segment covering 269 to 314 has biased composition (low complexity); the sequence is QSPAQPQQSSQQQIQQPQRQPQHQQQQQQQQQQQQQQQQQQQQQQQ. Composition is skewed to polar residues over residues 330 to 347, 421 to 439, and 572 to 585; these read SENSHSTGLMPSVPPTNQ, TRNNTAEETTPTNDNNANG, and KTNTSVPQNDSTSV. The segment covering 590-643 has biased composition (low complexity); the sequence is NNNNNNNNNNNNNNNSNNSNNNNNNNNSNNTPTVSQPSSKRTSSSSTTPNITTT. Residues 646-655 show a composition bias toward basic residues; that stretch reads PKRKQRVGKT.

The protein belongs to the MSS11 family. As to quaternary structure, interacts with FLO8, STE12 and TEC1.

It is found in the cytoplasm. The protein localises to the nucleus. Functionally, transcription factor that regulates pseudohyphal differentiation, invasive growth, floculation, adhesion and starch metabolism in response to nutrient availability. This chain is Transcription activator MSS11 (MSS11), found in Saccharomyces cerevisiae (strain YJM789) (Baker's yeast).